We begin with the raw amino-acid sequence, 329 residues long: Sulfate/thiosulfate import ATP-binding protein CysA (329 aa).

One can recognise an ABC transporter domain in the interval 3–237 (IEVRNVSKRF…PANDFVYHFL (235 aa)). 35–42 (GPSGCGKT) lines the ATP pocket.

The protein belongs to the ABC transporter superfamily. Sulfate/tungstate importer (TC 3.A.1.6) family. In terms of assembly, the complex is composed of two ATP-binding proteins (CysA), two transmembrane proteins (CysT and CysW) and a solute-binding protein (CysP).

It localises to the cell inner membrane. It carries out the reaction sulfate(out) + ATP + H2O = sulfate(in) + ADP + phosphate + H(+). The catalysed reaction is thiosulfate(out) + ATP + H2O = thiosulfate(in) + ADP + phosphate + H(+). Its function is as follows. Part of the ABC transporter complex CysAWTP involved in sulfate/thiosulfate import. Responsible for energy coupling to the transport system. This chain is Sulfate/thiosulfate import ATP-binding protein CysA, found in Pseudomonas putida (strain ATCC 47054 / DSM 6125 / CFBP 8728 / NCIMB 11950 / KT2440).